Consider the following 497-residue polypeptide: Cytochrome P450 CYP94D108 (497 aa).

A helical membrane pass occupies residues 6-26 (LLSLALLLLAAAAAAAFVLFP). Cysteine 439 is a heme binding site.

It belongs to the cytochrome P450 family. In terms of tissue distribution, mainly expressed in roots and, at low levels, in leaves, fruits and stems.

It is found in the membrane. The protein operates within steroid metabolism; cholesterol metabolism. Functionally, involved in the biosynthesis of spiroketal steroid and saponin natural products from cholesterol such as diosgenin and analogs (e.g. furostanol and spirostanol), plant defense compounds used as main precursors for the industrial production of steroid hormones. During the 5,6-spiroketalization of cholesterol, may catalyze the 27-monohydroxylation of furostanol-type steroid to an intermediate product that undergoes a stereospecific formation of the terminal heterocycle to yield diosgenin. The polypeptide is Cytochrome P450 CYP94D108 (Paris polyphylla (Daiswa polyphylla)).